The sequence spans 150 residues: 3-hydroxyacyl-[acyl-carrier-protein] dehydratase FabZ (150 aa).

H54 is a catalytic residue.

The protein belongs to the thioester dehydratase family. FabZ subfamily.

It localises to the cytoplasm. It catalyses the reaction a (3R)-hydroxyacyl-[ACP] = a (2E)-enoyl-[ACP] + H2O. Functionally, involved in unsaturated fatty acids biosynthesis. Catalyzes the dehydration of short chain beta-hydroxyacyl-ACPs and long chain saturated and unsaturated beta-hydroxyacyl-ACPs. The sequence is that of 3-hydroxyacyl-[acyl-carrier-protein] dehydratase FabZ from Pseudoalteromonas translucida (strain TAC 125).